An 885-amino-acid chain; its full sequence is Leucine--tRNA ligase (885 aa).

Residues 43-53 (PYTSGQLHMGH) carry the 'HIGH' region motif. The 'KMSKS' region signature appears at 571–575 (KMSKS). K574 contributes to the ATP binding site. The disordered stretch occupies residues 866–885 (SVANKAEPGRPAIHVDEADD).

Belongs to the class-I aminoacyl-tRNA synthetase family.

It is found in the cytoplasm. It catalyses the reaction tRNA(Leu) + L-leucine + ATP = L-leucyl-tRNA(Leu) + AMP + diphosphate. The chain is Leucine--tRNA ligase from Halobacterium salinarum (strain ATCC 700922 / JCM 11081 / NRC-1) (Halobacterium halobium).